Here is a 417-residue protein sequence, read N- to C-terminus: Probable serpin E3 (417 aa).

The N-terminal stretch at 1–24 (MPQLSASSLFICLWLVDLCHVANS) is a signal peptide. N-linked (GlcNAc...) asparagine glycans are attached at residues N50, N106, N140, N147, and N152.

It belongs to the serpin family.

It is found in the secreted. In terms of biological role, probable serine protease inhibitor. This is Probable serpin E3 (serpine3) from Danio rerio (Zebrafish).